The chain runs to 139 residues: Peptide methionine sulfoxide reductase MsrB (139 aa).

Positions 14-137 (DEEWRRELTP…NSISLDFQPE (124 aa)) constitute a MsrB domain. Residues C53, C56, C102, and C105 each contribute to the Zn(2+) site. Catalysis depends on C126, which acts as the Nucleophile.

This sequence belongs to the MsrB Met sulfoxide reductase family. Zn(2+) is required as a cofactor.

The enzyme catalyses L-methionyl-[protein] + [thioredoxin]-disulfide + H2O = L-methionyl-(R)-S-oxide-[protein] + [thioredoxin]-dithiol. This chain is Peptide methionine sulfoxide reductase MsrB, found in Leifsonia xyli subsp. xyli (strain CTCB07).